Here is a 341-residue protein sequence, read N- to C-terminus: CRISPR-associated endonuclease Cas1 (341 aa).

E173, H242, and E257 together coordinate Mn(2+).

The protein belongs to the CRISPR-associated endonuclease Cas1 family. As to quaternary structure, homodimer, forms a heterotetramer with a Cas2 homodimer. Mg(2+) is required as a cofactor. It depends on Mn(2+) as a cofactor.

CRISPR (clustered regularly interspaced short palindromic repeat), is an adaptive immune system that provides protection against mobile genetic elements (viruses, transposable elements and conjugative plasmids). CRISPR clusters contain spacers, sequences complementary to antecedent mobile elements, and target invading nucleic acids. CRISPR clusters are transcribed and processed into CRISPR RNA (crRNA). Acts as a dsDNA endonuclease. Involved in the integration of spacer DNA into the CRISPR cassette. This Korarchaeum cryptofilum (strain OPF8) protein is CRISPR-associated endonuclease Cas1.